A 139-amino-acid polypeptide reads, in one-letter code: ATP synthase epsilon chain, chloroplastic (139 aa).

This sequence belongs to the ATPase epsilon chain family. As to quaternary structure, F-type ATPases have 2 components, CF(1) - the catalytic core - and CF(0) - the membrane proton channel. CF(1) has five subunits: alpha(3), beta(3), gamma(1), delta(1), epsilon(1). CF(0) has three main subunits: a, b and c.

The protein resides in the plastid. It is found in the chloroplast thylakoid membrane. In terms of biological role, produces ATP from ADP in the presence of a proton gradient across the membrane. The protein is ATP synthase epsilon chain, chloroplastic of Dictyota dichotoma.